The following is a 299-amino-acid chain: Bifunctional protein FolD (299 aa).

Residues 168 to 170, Ser193, and Ile234 contribute to the NADP(+) site; that span reads GRS.

The protein belongs to the tetrahydrofolate dehydrogenase/cyclohydrolase family. In terms of assembly, homodimer.

The enzyme catalyses (6R)-5,10-methylene-5,6,7,8-tetrahydrofolate + NADP(+) = (6R)-5,10-methenyltetrahydrofolate + NADPH. It carries out the reaction (6R)-5,10-methenyltetrahydrofolate + H2O = (6R)-10-formyltetrahydrofolate + H(+). It functions in the pathway one-carbon metabolism; tetrahydrofolate interconversion. Functionally, catalyzes the oxidation of 5,10-methylenetetrahydrofolate to 5,10-methenyltetrahydrofolate and then the hydrolysis of 5,10-methenyltetrahydrofolate to 10-formyltetrahydrofolate. In Bartonella quintana (strain Toulouse) (Rochalimaea quintana), this protein is Bifunctional protein FolD.